We begin with the raw amino-acid sequence, 483 residues long: Cysteine proteinase 1, mitochondrial (483 aa).

A mitochondrion-targeting transit peptide spans 1-30; sequence MLPTSVSWSLYLKTFRSHLLRAPQIVLKRM. Residues C102, H398, and N421 contribute to the active site. Position 483 (K483) is a propeptide, removed in mature form; by autocatalysis.

It belongs to the peptidase C1 family. Homohexamer. Binds to nucleic acids. Binds single-stranded DNA and RNA with higher affinity than double-stranded DNA. The N-terminus of isoform Cytoplasmic is blocked.

Its subcellular location is the mitochondrion. The protein resides in the cytoplasm. It catalyses the reaction Inactivates bleomycin B2 (a cytotoxic glycometallopeptide) by hydrolysis of a carboxyamide bond of beta-aminoalanine, but also shows general aminopeptidase activity. The specificity varies somewhat with source, but amino acid arylamides of Met, Leu and Ala are preferred.. Inhibited by E64, a specific inhibitor of cysteine proteases, N-ethylmaleimide, iodacetamide, and mercury and zinc ions. In terms of biological role, the normal physiological role of the enzyme is unknown, but it is not essential for the viability of yeast cells. Has aminopeptidase activity, shortening substrate peptides sequentially by 1 amino acid. Has bleomycin hydrolase activity, which can protect the cell from the toxic effects of bleomycin. Has homocysteine-thiolactonase activity, protecting the cell against homocysteine toxicity. Acts as a repressor in the GAL4 regulatory system, but this does not require either the peptidase or nucleic acid-binding activities. The protein is Cysteine proteinase 1, mitochondrial (LAP3) of Saccharomyces cerevisiae (strain YJM789) (Baker's yeast).